The primary structure comprises 101 residues: Small ribosomal subunit protein uS14 (101 aa).

It belongs to the universal ribosomal protein uS14 family. In terms of assembly, part of the 30S ribosomal subunit. Contacts proteins S3 and S10.

Binds 16S rRNA, required for the assembly of 30S particles and may also be responsible for determining the conformation of the 16S rRNA at the A site. The polypeptide is Small ribosomal subunit protein uS14 (Neorickettsia sennetsu (strain ATCC VR-367 / Miyayama) (Ehrlichia sennetsu)).